The sequence spans 237 residues: Sugar fermentation stimulation protein homolog (237 aa).

The protein belongs to the SfsA family.

The sequence is that of Sugar fermentation stimulation protein homolog from Thioalkalivibrio sulfidiphilus (strain HL-EbGR7).